Consider the following 448-residue polypeptide: Phosphoglucosamine mutase (448 aa).

Catalysis depends on Ser-102, which acts as the Phosphoserine intermediate. The Mg(2+) site is built by Ser-102, Asp-243, Asp-245, and Asp-247. Ser-102 is subject to Phosphoserine.

The protein belongs to the phosphohexose mutase family. The cofactor is Mg(2+). Activated by phosphorylation.

It catalyses the reaction alpha-D-glucosamine 1-phosphate = D-glucosamine 6-phosphate. Functionally, catalyzes the conversion of glucosamine-6-phosphate to glucosamine-1-phosphate. The polypeptide is Phosphoglucosamine mutase (Mycobacterium bovis (strain ATCC BAA-935 / AF2122/97)).